Consider the following 351-residue polypeptide: Ion-translocating oxidoreductase complex subunit D (351 aa).

The next 4 membrane-spanning stretches (helical) occupy residues 20 to 40 (IMLL…YFFG), 44 to 64 (LIQV…TLSL), 89 to 109 (LPPL…IIIA), and 123 to 143 (PAMI…TSWL). Residue threonine 187 is modified to FMN phosphoryl threonine. The next 5 helical transmembrane spans lie at 215-235 (LSGI…LFLL), 244-264 (IPVS…VIAP), 267-287 (FAPP…FFIA), 301-321 (LIFG…GGYP), and 322-342 (DGVA…DYYT).

Belongs to the NqrB/RnfD family. The complex is composed of six subunits: RnfA, RnfB, RnfC, RnfD, RnfE and RnfG. It depends on FMN as a cofactor.

It is found in the cell inner membrane. Functionally, part of a membrane-bound complex that couples electron transfer with translocation of ions across the membrane. This Pectobacterium carotovorum subsp. carotovorum (strain PC1) protein is Ion-translocating oxidoreductase complex subunit D.